The following is a 283-amino-acid chain: 4-diphosphocytidyl-2-C-methyl-D-erythritol kinase (283 aa).

The active site involves K10. An ATP-binding site is contributed by 99-109 (PMGGGLGGGSS). D141 is an active-site residue.

This sequence belongs to the GHMP kinase family. IspE subfamily. In terms of assembly, homodimer.

It carries out the reaction 4-CDP-2-C-methyl-D-erythritol + ATP = 4-CDP-2-C-methyl-D-erythritol 2-phosphate + ADP + H(+). It functions in the pathway isoprenoid biosynthesis; isopentenyl diphosphate biosynthesis via DXP pathway; isopentenyl diphosphate from 1-deoxy-D-xylulose 5-phosphate: step 3/6. Functionally, catalyzes the phosphorylation of the position 2 hydroxy group of 4-diphosphocytidyl-2C-methyl-D-erythritol. The chain is 4-diphosphocytidyl-2-C-methyl-D-erythritol kinase from Salmonella paratyphi C (strain RKS4594).